We begin with the raw amino-acid sequence, 262 residues long: Small ribosomal subunit protein eS1 (262 aa).

This sequence belongs to the eukaryotic ribosomal protein eS1 family. In terms of assembly, component of the small ribosomal subunit. Mature ribosomes consist of a small (40S) and a large (60S) subunit. The 40S subunit contains about 32 different proteins and 1 molecule of RNA (18S). The 60S subunit contains about 42 different proteins and 3 molecules of RNA (28S, 5.8S and 5S).

The protein resides in the cytoplasm. Its function is as follows. Component of the ribosome, a large ribonucleoprotein complex responsible for the synthesis of proteins in the cell. The small ribosomal subunit (SSU) binds messenger RNAs (mRNAs) and translates the encoded message by selecting cognate aminoacyl-transfer RNA (tRNA) molecules. The large subunit (LSU) contains the ribosomal catalytic site termed the peptidyl transferase center (PTC), which catalyzes the formation of peptide bonds, thereby polymerizing the amino acids delivered by tRNAs into a polypeptide chain. The nascent polypeptides leave the ribosome through a tunnel in the LSU and interact with protein factors that function in enzymatic processing, targeting, and the membrane insertion of nascent chains at the exit of the ribosomal tunnel. The sequence is that of Small ribosomal subunit protein eS1 from Plasmodium falciparum (isolate 3D7).